We begin with the raw amino-acid sequence, 246 residues long: 1-(5-phosphoribosyl)-5-[(5-phosphoribosylamino)methylideneamino] imidazole-4-carboxamide isomerase (246 aa).

The active-site Proton acceptor is Asp7. The active-site Proton donor is Asp129.

It belongs to the HisA/HisF family.

It is found in the cytoplasm. The catalysed reaction is 1-(5-phospho-beta-D-ribosyl)-5-[(5-phospho-beta-D-ribosylamino)methylideneamino]imidazole-4-carboxamide = 5-[(5-phospho-1-deoxy-D-ribulos-1-ylimino)methylamino]-1-(5-phospho-beta-D-ribosyl)imidazole-4-carboxamide. Its pathway is amino-acid biosynthesis; L-histidine biosynthesis; L-histidine from 5-phospho-alpha-D-ribose 1-diphosphate: step 4/9. This is 1-(5-phosphoribosyl)-5-[(5-phosphoribosylamino)methylideneamino] imidazole-4-carboxamide isomerase from Shewanella sediminis (strain HAW-EB3).